The sequence spans 544 residues: Phenylalanine--tRNA ligase beta subunit (544 aa).

Positions 270-346 (LEPKTRFLTK…KGYGYENIKV (77 aa)) constitute a B5 domain. Mg(2+) contacts are provided by Asp324, Asp330, Glu333, and Asp334.

This sequence belongs to the phenylalanyl-tRNA synthetase beta subunit family. Type 2 subfamily. Tetramer of two alpha and two beta subunits. Mg(2+) is required as a cofactor.

Its subcellular location is the cytoplasm. The enzyme catalyses tRNA(Phe) + L-phenylalanine + ATP = L-phenylalanyl-tRNA(Phe) + AMP + diphosphate + H(+). The protein is Phenylalanine--tRNA ligase beta subunit of Methanosarcina barkeri (strain Fusaro / DSM 804).